The following is a 315-amino-acid chain: Transaldolase (315 aa).

The active-site Schiff-base intermediate with substrate is the lysine 131.

The protein belongs to the transaldolase family. Type 1 subfamily. Homodimer.

Its subcellular location is the cytoplasm. It catalyses the reaction D-sedoheptulose 7-phosphate + D-glyceraldehyde 3-phosphate = D-erythrose 4-phosphate + beta-D-fructose 6-phosphate. The protein operates within carbohydrate degradation; pentose phosphate pathway; D-glyceraldehyde 3-phosphate and beta-D-fructose 6-phosphate from D-ribose 5-phosphate and D-xylulose 5-phosphate (non-oxidative stage): step 2/3. Functionally, transaldolase is important for the balance of metabolites in the pentose-phosphate pathway. The sequence is that of Transaldolase from Haemophilus ducreyi (strain 35000HP / ATCC 700724).